The following is a 102-amino-acid chain: RNA-binding protein Hfq (102 aa).

The Sm domain maps to 9 to 68 (DPFLNALRRERVPVSIYLVNGIKLQGQIESFDQFVILLKNTVSQMVYKHAISTVVPSRPV). The interval 63 to 102 (VPSRPVSHHSNNAGGGSSNYHHGGSAQGSSAPQQDSDDAE) is disordered. Over residues 70-86 (HHSNNAGGGSSNYHHGG) the composition is skewed to low complexity.

This sequence belongs to the Hfq family. As to quaternary structure, homohexamer.

Its function is as follows. RNA chaperone that binds small regulatory RNA (sRNAs) and mRNAs to facilitate mRNA translational regulation in response to envelope stress, environmental stress and changes in metabolite concentrations. Also binds with high specificity to tRNAs. The polypeptide is RNA-binding protein Hfq (Klebsiella pneumoniae (strain 342)).